The following is a 330-amino-acid chain: Tryptophan--tRNA ligase (330 aa).

ATP is bound by residues 10–12 (QTT) and 18–19 (GN). The 'HIGH' region motif lies at 11 to 19 (TTGALHLGN). Aspartate 134 contacts L-tryptophan. ATP-binding positions include 146–148 (GED), isoleucine 186, and 195–199 (KMSKS). The short motif at 195-199 (KMSKS) is the 'KMSKS' region element.

It belongs to the class-I aminoacyl-tRNA synthetase family. In terms of assembly, homodimer.

The protein localises to the cytoplasm. It catalyses the reaction tRNA(Trp) + L-tryptophan + ATP = L-tryptophyl-tRNA(Trp) + AMP + diphosphate + H(+). Catalyzes the attachment of tryptophan to tRNA(Trp). The polypeptide is Tryptophan--tRNA ligase (Rickettsia typhi (strain ATCC VR-144 / Wilmington)).